We begin with the raw amino-acid sequence, 473 residues long: Bactericidal permeability-increasing protein (473 aa).

The first 18 residues, 1–18 (MVLCCWLALVALIPMTLS), serve as a signal peptide directing secretion. The tract at residues 19–29 (INPGVKVRLTG) is central sheet, part 1. Residues 28–209 (TGKGLEYGRQ…SDLNPQLKTL (182 aa)) form an N-terminal barrel region. Cys153 and Cys192 are joined by a disulfide. The segment at 211–275 (VLAKVDQYAE…INNMLYISVS (65 aa)) is central sheet, part 2. Residues 225–230 (MVSSPT) are cleavage sites for elastase. Residues 276–446 (AFTINSAAFV…LAKGYPLPTL (171 aa)) form a C-terminal barrel region. Residue Asn365 is glycosylated (N-linked (GlcNAc...) asparagine). The tract at residues 453 to 472 (NTELQVLKDYMLIGTDVQFT) is central sheet, part 3.

It belongs to the BPI/LBP/Plunc superfamily. BPI/LBP family. In terms of assembly, monomer. Homodimer; disulfide-linked. Expressed in spleen. Lower expression in gill, head kidney, entire kidney, skin, intestine and blood and lowest expression in liver and muscle.

It localises to the secreted. In terms of biological role, the cytotoxic action of BPI is limited to many species of Gram-negative bacteria; this specificity may be explained by a strong affinity of the very basic N-terminal half for the negatively charged lipopolysaccharides that are unique to the Gram-negative bacterial outer envelope. Exhibits neutralizing capacity towards P.aeruginosa lipopolysaccharides (LPS) and has bactericidal activity against multiple drug resistant (MDR) P.aeruginosa strains derived from people with cystic fibrosis. Has antibacterial activity against E.coli, but not against S.iniae. The protein is Bactericidal permeability-increasing protein of Sebastes schlegelii (Korean rockfish).